The primary structure comprises 481 residues: Protein nucleotidyltransferase YdiU (481 aa).

ATP contacts are provided by Gly85, Gly87, Arg88, Lys108, Asp120, Gly121, Arg172, and Arg179. Asp248 (proton acceptor) is an active-site residue. Positions 249 and 258 each coordinate Mg(2+). Asp258 contributes to the ATP binding site.

Belongs to the SELO family. The cofactor is Mg(2+). It depends on Mn(2+) as a cofactor.

It carries out the reaction L-seryl-[protein] + ATP = 3-O-(5'-adenylyl)-L-seryl-[protein] + diphosphate. The enzyme catalyses L-threonyl-[protein] + ATP = 3-O-(5'-adenylyl)-L-threonyl-[protein] + diphosphate. It catalyses the reaction L-tyrosyl-[protein] + ATP = O-(5'-adenylyl)-L-tyrosyl-[protein] + diphosphate. The catalysed reaction is L-histidyl-[protein] + UTP = N(tele)-(5'-uridylyl)-L-histidyl-[protein] + diphosphate. It carries out the reaction L-seryl-[protein] + UTP = O-(5'-uridylyl)-L-seryl-[protein] + diphosphate. The enzyme catalyses L-tyrosyl-[protein] + UTP = O-(5'-uridylyl)-L-tyrosyl-[protein] + diphosphate. In terms of biological role, nucleotidyltransferase involved in the post-translational modification of proteins. It can catalyze the addition of adenosine monophosphate (AMP) or uridine monophosphate (UMP) to a protein, resulting in modifications known as AMPylation and UMPylation. This chain is Protein nucleotidyltransferase YdiU, found in Cereibacter sphaeroides (strain ATCC 17023 / DSM 158 / JCM 6121 / CCUG 31486 / LMG 2827 / NBRC 12203 / NCIMB 8253 / ATH 2.4.1.) (Rhodobacter sphaeroides).